The sequence spans 1260 residues: Methionine synthase (1260 aa).

A Hcy-binding domain is found at 13–333 (FGIIRKILSE…DHIRAFCNAI (321 aa)). Residues cysteine 255, cysteine 318, and cysteine 319 each coordinate Zn(2+). The region spanning 364 to 625 (FVNVGERCNV…IPKDLLKLVE (262 aa)) is the Pterin-binding domain. Positions 655–749 (EVEEWRNKPV…FMEEEKRLKR (95 aa)) constitute a B12-binding N-terminal domain. Methylcob(III)alamin contacts are provided by residues glutamate 699, 775-779 (GDVHD), histidine 778, serine 823, threonine 827, and alanine 879. The B12-binding domain occupies 766–883 (GVVVLATVKG…VHVLDASRSV (118 aa)). One can recognise an AdoMet activation domain in the interval 916–1256 (SLKDRKYTSL…LSSILSYDRL (341 aa)). S-adenosyl-L-methionine is bound by residues aspartate 966, arginine 1163, and 1218-1219 (YF).

The protein belongs to the vitamin-B12 dependent methionine synthase family. Methylcob(III)alamin serves as cofactor. Requires Zn(2+) as cofactor.

The catalysed reaction is (6S)-5-methyl-5,6,7,8-tetrahydrofolate + L-homocysteine = (6S)-5,6,7,8-tetrahydrofolate + L-methionine. Its pathway is amino-acid biosynthesis; L-methionine biosynthesis via de novo pathway; L-methionine from L-homocysteine (MetH route): step 1/1. Catalyzes the transfer of a methyl group from methyl-cobalamin to homocysteine, yielding enzyme-bound cob(I)alamin and methionine. Subsequently, remethylates the cofactor using methyltetrahydrofolate. The chain is Methionine synthase (mtr) from Dictyostelium discoideum (Social amoeba).